The primary structure comprises 304 residues: Mitochondrial glycine transporter (304 aa).

3 Solcar repeats span residues 3 to 82 (GKSK…VREA), 106 to 186 (ENLI…LKVA), and 209 to 293 (SSAM…LVKR). The next 6 helical transmembrane spans lie at 9 to 34 (IYAGFTSGLVSAVVLQPFDLLKTRVQ), 57 to 83 (GTLPSALRMSVGSAMYFTCLNTVREAV), 108 to 133 (LISGGLVRGTVGLLVMPITVIKVRYE), 161 to 184 (GWAATFARDAPYAGLYMLFYEQLK), 213 to 239 (INSVAAATSAGIATTCTNPFDTVKTRM), and 268 to 286 (GLALRICRKACQAGISWCI).

The protein belongs to the mitochondrial carrier (TC 2.A.29) family. SLC25A38 subfamily.

The protein resides in the mitochondrion inner membrane. The catalysed reaction is glycine(in) = glycine(out). Functionally, mitochondrial glycine transporter that imports glycine into the mitochondrial matrix. Plays an important role in providing glycine for the first enzymatic step in heme biosynthesis, the condensation of glycine with succinyl-CoA to produce 5-aminolevulinate (ALA) in the mitochondrial matrix. This chain is Mitochondrial glycine transporter, found in Yarrowia lipolytica (strain CLIB 122 / E 150) (Yeast).